Reading from the N-terminus, the 417-residue chain is MPLYEGLGSGGEKTAVVIDLGEAFTKCGFAGETGPRCIIPSVIKRAGMPKPVRVVQYNINTEELYSYLKEFIHILYFRHLLVNPRDRRVVIIESVLCPSHFRETLTRVLFKYFEVPSVLLAPSHLMALLTLGINSAMVLDCGYRESLVLPIYEGIPVLNCWGALPLGGKALHKELETQLLEQCTVDTSVAKEQSLPSVMGSVPEGVLEDIKARTCFVSDLKRGLKIQAAKFNIDGNNERPSPPPNVDYPLDGEKILHILGSIRDSVVEILFEQDNEEQSVATLILDSLIQCPIDTRKQLAENLVVIGGTSMLPGFLHRLLAEIRYLVEKPKYKKALGTKTFRIHTPPAKANCVAWLGGAIFGALQDILGSRSVSKEYYNQTGRIPDWCSLNNPPLEMMFDVGKTQPPLMKRAFSTEK.

The protein belongs to the actin family. As to quaternary structure, subunit of dynactin, a multiprotein complex part of a tripartite complex with dynein and a adapter, such as BICDL1, BICD2 or HOOK3. The dynactin complex is built around ACTR1A/ACTB filament and consists of an actin-related filament composed of a shoulder domain, a pointed end and a barbed end. Its length is defined by its flexible shoulder domain. The soulder is composed of 2 DCTN1 subunits, 4 DCTN2 and 2 DCTN3. The 4 DCNT2 (via N-terminus) bind the ACTR1A filament and act as molecular rulers to determine the length. The pointed end is important for binding dynein-dynactin cargo adapters. Consists of 4 subunits: ACTR10, DCNT4, DCTN5 and DCTN6. The barbed end is composed of a CAPZA1:CAPZB heterodimers, which binds ACTR1A/ACTB filament and dynactin and stabilizes dynactin.

Its subcellular location is the cytoplasm. The protein resides in the cytoskeleton. Part of the dynactin complex that activates the molecular motor dynein for ultra-processive transport along microtubules. In Homo sapiens (Human), this protein is Actin-related protein 10 (ACTR10).